An 886-amino-acid polypeptide reads, in one-letter code: Alanine--tRNA ligase (886 aa).

Residues His564, His568, Cys666, and His670 each coordinate Zn(2+).

This sequence belongs to the class-II aminoacyl-tRNA synthetase family. Zn(2+) is required as a cofactor.

Its subcellular location is the cytoplasm. It catalyses the reaction tRNA(Ala) + L-alanine + ATP = L-alanyl-tRNA(Ala) + AMP + diphosphate. Catalyzes the attachment of alanine to tRNA(Ala) in a two-step reaction: alanine is first activated by ATP to form Ala-AMP and then transferred to the acceptor end of tRNA(Ala). Also edits incorrectly charged Ser-tRNA(Ala) and Gly-tRNA(Ala) via its editing domain. This Prochlorococcus marinus (strain MIT 9312) protein is Alanine--tRNA ligase.